Consider the following 298-residue polypeptide: Glutamyl-Q tRNA(Asp) synthetase (298 aa).

Residues 9–13 (RFAPS) and Glu-45 each bind L-glutamate. Residues 12 to 22 (PSPTGLLHAGS) carry the 'HIGH' region motif. Zn(2+) contacts are provided by Cys-101, Cys-103, Tyr-121, and Cys-125. L-glutamate contacts are provided by Tyr-179 and Arg-197. A 'KMSKS' region motif is present at residues 235–239 (KLSKQ). Lys-238 contributes to the ATP binding site.

The protein belongs to the class-I aminoacyl-tRNA synthetase family. GluQ subfamily. Requires Zn(2+) as cofactor.

Its function is as follows. Catalyzes the tRNA-independent activation of glutamate in presence of ATP and the subsequent transfer of glutamate onto a tRNA(Asp). Glutamate is transferred on the 2-amino-5-(4,5-dihydroxy-2-cyclopenten-1-yl) moiety of the queuosine in the wobble position of the QUC anticodon. The sequence is that of Glutamyl-Q tRNA(Asp) synthetase from Chromobacterium violaceum (strain ATCC 12472 / DSM 30191 / JCM 1249 / CCUG 213 / NBRC 12614 / NCIMB 9131 / NCTC 9757 / MK).